The sequence spans 187 residues: KS71A fimbrillin (187 aa).

An N-terminal signal peptide occupies residues 1–21 (MIKSVIAGAVAMAVVSFGANA). Cys-43 and Cys-82 are disulfide-bonded.

It belongs to the fimbrial protein family.

Its subcellular location is the fimbrium. Its function is as follows. Fimbriae (also called pili), polar filaments radiating from the surface of the bacterium to a length of 0.5-1.5 micrometers and numbering 100-300 per cell, enable bacteria to colonize the epithelium of specific host organs. The protein is KS71A fimbrillin (KS71A) of Escherichia coli.